The sequence spans 569 residues: MAAASNLSTLSSSSLSKPSSSFPFRNTPTNNNASFLHNKSLPNQNSLSHKLSSPLPLACNPKNQNTCVFFDDEDQKPREECGVVGIYGDPEASRLCSLALHALQHRGQEGAGIVAVHDNHLQSVTGVGLVSDVFEQSKLSRLPGTSAIGHVRYSTAGQSMLKNVQPFLADYRFAAVAVAHNGNFVNYRSLRARLEHNNGSIFNTTSDTEVVLHLIATSKHRPFLLRIVDACEHLQGAYSLVFVTEDKLVAVRDPFGFRPLVMGRRTNGAVVLASETCALDLIEATYEREVYPGEVIVVDHTGIQSLCLVSHPEPKQCIFEHIYFALPNSVVFGRSVYESRKKFGEILASESPVECDVVIAVPDSGVVAALGYAAKAGVPFQQGLIRSHYVGRTFIEPSQKIRDFGVKLKLSPVHAVLEGKRVVVVDDSIVRGTTSSKIVRLLKEAGAKEVHMRIACPPIVASCYYGVDTPSSEELISNRMSVEEIRKFIGSDSLAFLPLDKLKTLLGDDALNYCYACFSGKYPVEPEELQMKRLGVAHFNWDDDFNGNFESIDVGGWVTNQDGFKIGSV.

A compositionally biased stretch (low complexity) spans 1–21; the sequence is MAAASNLSTLSSSSLSKPSSS. Positions 1–51 are disordered; it reads MAAASNLSTLSSSSLSKPSSSFPFRNTPTNNNASFLHNKSLPNQNSLSHKL. The N-terminal 80 residues, 1-80, are a transit peptide targeting the chloroplast; the sequence is MAAASNLSTL…DDEDQKPREE (80 aa). The span at 22 to 45 shows a compositional bias: polar residues; that stretch reads FPFRNTPTNNNASFLHNKSLPNQN. Cys81 serves as the catalytic Nucleophile. One can recognise a Glutamine amidotransferase type-2 domain in the interval 81 to 301; the sequence is CGVVGIYGDP…PGEVIVVDHT (221 aa). [4Fe-4S] cluster is bound at residue Cys317. The Mg(2+) site is built by Ser364, Asp426, and Asp427. [4Fe-4S] cluster-binding residues include Cys463, Cys514, and Cys517.

This sequence in the C-terminal section; belongs to the purine/pyrimidine phosphoribosyltransferase family. Mg(2+) is required as a cofactor. Requires [4Fe-4S] cluster as cofactor.

The protein localises to the plastid. It localises to the chloroplast. The enzyme catalyses 5-phospho-beta-D-ribosylamine + L-glutamate + diphosphate = 5-phospho-alpha-D-ribose 1-diphosphate + L-glutamine + H2O. The protein operates within purine metabolism; IMP biosynthesis via de novo pathway; N(1)-(5-phospho-D-ribosyl)glycinamide from 5-phospho-alpha-D-ribose 1-diphosphate: step 1/2. This Glycine max (Soybean) protein is Amidophosphoribosyltransferase, chloroplastic (PUR1).